The primary structure comprises 563 residues: DNA repair protein rhp7 (563 aa).

The disordered stretch occupies residues 1-101 (MSSGSRVRGP…TDEEAEDNED (101 aa)). Positions 39–59 (ESAGQSTGTESEVIQTPTSVE) are enriched in polar residues. A compositionally biased stretch (basic residues) spans 78–90 (VKRRNLRNQKKKK).

It belongs to the RAD7 family.

The protein localises to the nucleus. Involved in global genome repair (GGR) via nucleotide excision repair (NER), in conjunction with rhp16, after UV irradiation. In Schizosaccharomyces pombe (strain 972 / ATCC 24843) (Fission yeast), this protein is DNA repair protein rhp7 (rhp7).